A 380-amino-acid polypeptide reads, in one-letter code: Cytochrome b (380 aa).

4 consecutive transmembrane segments (helical) span residues 34-54 (FGSLLAVCLATQIITGLLLAA), 78-99 (WLIRNLHANGASFFFICIYLHI), 114-134 (WNTGVILLLTLMATAFVGYVL), and 179-199 (FFALHFLLPFIIAGITIIHLA). Heme b is bound by residues H84 and H98. Heme b contacts are provided by H183 and H197. Position 202 (H202) interacts with a ubiquinone. 4 helical membrane passes run 227 to 247 (LKDILGLALMITPLLTLALFS), 289 to 309 (LGGVLALAASVFILFLIPLLH), 321 to 341 (LSQLLFWLLAANLFILTWIGS), and 348 to 368 (FIIIGQLASLSYFTTLLILFP).

This sequence belongs to the cytochrome b family. The cytochrome bc1 complex contains 11 subunits: 3 respiratory subunits (MT-CYB, CYC1 and UQCRFS1), 2 core proteins (UQCRC1 and UQCRC2) and 6 low-molecular weight proteins (UQCRH/QCR6, UQCRB/QCR7, UQCRQ/QCR8, UQCR10/QCR9, UQCR11/QCR10 and a cleavage product of UQCRFS1). This cytochrome bc1 complex then forms a dimer. Heme b serves as cofactor.

Its subcellular location is the mitochondrion inner membrane. In terms of biological role, component of the ubiquinol-cytochrome c reductase complex (complex III or cytochrome b-c1 complex) that is part of the mitochondrial respiratory chain. The b-c1 complex mediates electron transfer from ubiquinol to cytochrome c. Contributes to the generation of a proton gradient across the mitochondrial membrane that is then used for ATP synthesis. The chain is Cytochrome b (MT-CYB) from Cyrtonyx montezumae (Montezuma quail).